A 418-amino-acid chain; its full sequence is Type II methyltransferase M.MspI (418 aa).

The 300-residue stretch at 105 to 404 (FKFIDLFSGI…EQISLALKTV (300 aa)) folds into the SAM-dependent MTase C5-type domain. Cys-174 is an active-site residue.

The protein belongs to the class I-like SAM-binding methyltransferase superfamily. C5-methyltransferase family.

The catalysed reaction is a 2'-deoxycytidine in DNA + S-adenosyl-L-methionine = a 5-methyl-2'-deoxycytidine in DNA + S-adenosyl-L-homocysteine + H(+). Its function is as follows. A methylase, recognizes the double-stranded sequence 5'-CCGG-3', methylates C-1 on both strands, and protects the DNA from cleavage by the MspI endonuclease. The chain is Type II methyltransferase M.MspI (mspIM) from Moraxella sp.